The following is a 130-amino-acid chain: Holo-[acyl-carrier-protein] synthase (130 aa).

Residues D9 and E58 each contribute to the Mg(2+) site.

Belongs to the P-Pant transferase superfamily. AcpS family. Mg(2+) serves as cofactor.

Its subcellular location is the cytoplasm. The catalysed reaction is apo-[ACP] + CoA = holo-[ACP] + adenosine 3',5'-bisphosphate + H(+). Its function is as follows. Transfers the 4'-phosphopantetheine moiety from coenzyme A to a Ser of acyl-carrier-protein. This is Holo-[acyl-carrier-protein] synthase from Mycobacterium leprae (strain Br4923).